A 100-amino-acid polypeptide reads, in one-letter code: Large ribosomal subunit protein bL28 (100 aa).

The protein belongs to the bacterial ribosomal protein bL28 family.

The protein is Large ribosomal subunit protein bL28 of Ehrlichia ruminantium (strain Welgevonden).